The following is a 366-amino-acid chain: Beta-1,3-glucan-binding protein (366 aa).

The signal sequence occupies residues 1 to 17 (MKGFVASVVLLACGALA). The region spanning 18-364 (ADIVEPEDCT…YVRVWKMEST (347 aa)) is the GH16 domain. An N-linked (GlcNAc...) asparagine glycan is attached at Asn66.

Belongs to the glycosyl hydrolase 16 family. Constitutively expressed in hemocytes.

Its subcellular location is the secreted. Functionally, binds to beta-1,3-glucan. May play a role in recognition of microorganisms and in activation of the prophenoloxidase cascade. This Penaeus monodon (Giant tiger prawn) protein is Beta-1,3-glucan-binding protein.